Reading from the N-terminus, the 119-residue chain is Large ribosomal subunit protein uL14 (119 aa).

It belongs to the universal ribosomal protein uL14 family. In terms of assembly, part of the 50S ribosomal subunit. Forms a cluster with proteins L3 and L19. In the 70S ribosome, L14 and L19 interact and together make contacts with the 16S rRNA in bridges B5 and B8.

Binds to 23S rRNA. Forms part of two intersubunit bridges in the 70S ribosome. This Wolbachia pipientis wMel protein is Large ribosomal subunit protein uL14.